Reading from the N-terminus, the 343-residue chain is Dihydroorotase (343 aa).

2 residues coordinate Zn(2+): histidine 13 and histidine 15. Residues histidine 15–arginine 17 and asparagine 41 contribute to the substrate site. Residues lysine 99, histidine 136, and histidine 174 each coordinate Zn(2+). Lysine 99 is modified (N6-carboxylysine). Substrate is bound at residue histidine 136. Residue leucine 219 participates in substrate binding. Aspartate 247 is a binding site for Zn(2+). Aspartate 247 is an active-site residue. 2 residues coordinate substrate: histidine 251 and alanine 263.

Belongs to the metallo-dependent hydrolases superfamily. DHOase family. Class II DHOase subfamily. Homodimer. Zn(2+) serves as cofactor.

It carries out the reaction (S)-dihydroorotate + H2O = N-carbamoyl-L-aspartate + H(+). Its pathway is pyrimidine metabolism; UMP biosynthesis via de novo pathway; (S)-dihydroorotate from bicarbonate: step 3/3. Catalyzes the reversible cyclization of carbamoyl aspartate to dihydroorotate. This is Dihydroorotase from Alkalilimnicola ehrlichii (strain ATCC BAA-1101 / DSM 17681 / MLHE-1).